We begin with the raw amino-acid sequence, 241 residues long: MSLKAISAKDAASLDKDLMEMGGWSLDQLMELAGLSVSQAGMWSIYRLHPPSAGKNVLVVCGPGNNGGDGLVAARHLAQYGYTPSVYYPKEGKNELYQRLKTQLHNLSVPFVPDFTEALKSADFLVDAIFGFSFGGPLREPFPSIISQIESSSVPVLSVDAPSSWDIQSGPPKEGPGSKFMPKALISLTAPKPCVKYYRGRHFVGGRFLTKSIVEKYGLNCPDYPGIDQIVEVGVDAEGRL.

The YjeF N-terminal domain maps to 11-221 (AASLDKDLME…SIVEKYGLNC (211 aa)). 65-69 (NNGGD) is a (6S)-NADPHX binding site. The K(+) site is built by N66 and D127. Residues 131–137 (GFSFGGP) and D160 contribute to the (6S)-NADPHX site. A K(+)-binding site is contributed by S163.

This sequence belongs to the NnrE/AIBP family. It depends on K(+) as a cofactor.

It localises to the cytoplasm. The protein resides in the mitochondrion. It catalyses the reaction (6R)-NADHX = (6S)-NADHX. The enzyme catalyses (6R)-NADPHX = (6S)-NADPHX. Its function is as follows. Catalyzes the epimerization of the S- and R-forms of NAD(P)HX, a damaged form of NAD(P)H that is a result of enzymatic or heat-dependent hydration. This is a prerequisite for the S-specific NAD(P)H-hydrate dehydratase to allow the repair of both epimers of NAD(P)HX. The sequence is that of NAD(P)H-hydrate epimerase from Aspergillus fumigatus (strain ATCC MYA-4609 / CBS 101355 / FGSC A1100 / Af293) (Neosartorya fumigata).